We begin with the raw amino-acid sequence, 169 residues long: Regulator of ribonuclease activity A (169 aa).

Belongs to the RraA family. As to quaternary structure, homotrimer. Binds to both RNA-binding sites in the C-terminal region of Rne and to RhlB.

Its subcellular location is the cytoplasm. Functionally, globally modulates RNA abundance by binding to RNase E (Rne) and regulating its endonucleolytic activity. Can modulate Rne action in a substrate-dependent manner by altering the composition of the degradosome. Modulates RNA-binding and helicase activities of the degradosome. The polypeptide is Regulator of ribonuclease activity A (Photorhabdus laumondii subsp. laumondii (strain DSM 15139 / CIP 105565 / TT01) (Photorhabdus luminescens subsp. laumondii)).